The primary structure comprises 332 residues: Adenosine receptor A2b (332 aa).

Residues 1–8 lie on the Extracellular side of the membrane; sequence MPLEAQDA. The chain crosses the membrane as a helical span at residues 9–33; the sequence is VYVALELALAALSVTGNVLVCAAVG. The Cytoplasmic segment spans residues 34–43; sequence TSSALQTPTN. The helical transmembrane segment at 44 to 67 threads the bilayer; it reads YFLVSLAAADVAVGLFAIPFAVTI. At 68–78 the chain is on the extracellular side; the sequence is SLGFCTDFHSC. A disulfide bond links cysteine 78 and cysteine 170. The helical transmembrane segment at 79-101 threads the bilayer; it reads LFLACFVLVLTQSSIFSLLAVAV. Topologically, residues 102 to 121 are cytoplasmic; that stretch reads DRYLAVRVPLRYKSLVTGAR. A helical membrane pass occupies residues 122 to 144; the sequence is ARGVIAALWVLAFGIGLTPFLGW. Residues 145–177 lie on the Extracellular side of the membrane; it reads NDRKIATNCTEPGDAATNVSCCLIRCLFENVVP. N-linked (GlcNAc...) asparagine glycosylation is found at asparagine 152 and asparagine 162. Glutamate 173 serves as a coordination point for adenosine. The chain crosses the membrane as a helical span at residues 178 to 202; the sequence is MSYMVYFNFFGCVLPPLLIMLVIYV. Residues 203–234 lie on the Cytoplasmic side of the membrane; sequence KIFLVACRQLQRTELMDHSRTVLQREIHAAKS. A helical membrane pass occupies residues 235–258; that stretch reads LALIVGIFALCWLPVHTINCASLF. Asparagine 253 is a binding site for adenosine. The Extracellular segment spans residues 259–266; sequence QPTWAKVK. A helical membrane pass occupies residues 267-290; sequence PKWAINTAILLSHANSAVNPIVYA. 2 residues coordinate adenosine: serine 278 and histidine 279. Residues 291–332 are Cytoplasmic-facing; that stretch reads YRNRDFRYTFHKIISRYILCRTHILKSGEGQVGSQPTLQLGL. The S-palmitoyl cysteine moiety is linked to residue cysteine 310.

This sequence belongs to the G-protein coupled receptor 1 family.

The protein resides in the cell membrane. Functionally, receptor for adenosine. The activity of this receptor is mediated by G proteins which activate adenylyl cyclase. This chain is Adenosine receptor A2b (ADORA2B), found in Bos taurus (Bovine).